Consider the following 584-residue polypeptide: Aspartate--tRNA(Asp/Asn) ligase (584 aa).

An L-aspartate-binding site is contributed by glutamate 177. The segment at 201–204 (QLFK) is aspartate. Arginine 223 is an L-aspartate binding site. ATP-binding positions include 223–225 (RDE) and glutamine 232. Histidine 447 is an L-aspartate binding site. Glutamate 481 serves as a coordination point for ATP. Residue arginine 488 participates in L-aspartate binding. 533 to 536 (GLDR) provides a ligand contact to ATP.

Belongs to the class-II aminoacyl-tRNA synthetase family. Type 1 subfamily. As to quaternary structure, homodimer.

It localises to the cytoplasm. It catalyses the reaction tRNA(Asx) + L-aspartate + ATP = L-aspartyl-tRNA(Asx) + AMP + diphosphate. Functionally, aspartyl-tRNA synthetase with relaxed tRNA specificity since it is able to aspartylate not only its cognate tRNA(Asp) but also tRNA(Asn). Reaction proceeds in two steps: L-aspartate is first activated by ATP to form Asp-AMP and then transferred to the acceptor end of tRNA(Asp/Asn). The polypeptide is Aspartate--tRNA(Asp/Asn) ligase (Chlamydia caviae (strain ATCC VR-813 / DSM 19441 / 03DC25 / GPIC) (Chlamydophila caviae)).